A 386-amino-acid chain; its full sequence is Methionine aminotransferase (386 aa).

An N6-(pyridoxal phosphate)lysine modification is found at Lys236.

It belongs to the class-I pyridoxal-phosphate-dependent aminotransferase family. Homodimer. It depends on pyridoxal 5'-phosphate as a cofactor.

It localises to the cytoplasm. It carries out the reaction a 2-oxocarboxylate + L-methionine = 4-methylsulfanyl-2-oxobutanoate + an L-alpha-amino acid. Shows aminotransferase activity with methionine and histidine as substrates, and to a lesser extent also with phenylalanine. In Escherichia coli (strain K12), this protein is Methionine aminotransferase (ybdL).